We begin with the raw amino-acid sequence, 842 residues long: Glucans biosynthesis glucosyltransferase H (842 aa).

Transmembrane regions (helical) follow at residues 140–160, 194–214, 513–533, 570–590, 615–635, 656–676, and 680–700; these read ILLLLTLAQTVVATWYMKTIL, ILILFAVLFCWVSAGFWTALM, VFLTGVMSYLSAPLWFMFLAL, LFASTMVLLFLPKLLSIMLIW, VLLAPVRMLFHTVFVVSAFLG, FMRHGSQLLLGLVWAVGMAWL, and FLFWLAPIVFSLILSPFVSVV.

Belongs to the glycosyltransferase 2 family. OpgH subfamily.

It is found in the cell inner membrane. It functions in the pathway glycan metabolism; osmoregulated periplasmic glucan (OPG) biosynthesis. Involved in the biosynthesis of osmoregulated periplasmic glucans (OPGs). The sequence is that of Glucans biosynthesis glucosyltransferase H from Citrobacter koseri (strain ATCC BAA-895 / CDC 4225-83 / SGSC4696).